The following is a 162-amino-acid chain: MATDVAFDTSMGSFTVELYNAHAPKTCKNFATLAQRGYYNNVIFHRIIPNFMVQTGDPTGTGRGGSSIYGEKFEDEINPNLKHTGAGILSMANSGPNNNGSQFFITLAPQPWLDGKHTIFGRVKSGMRVIQRMGLVKTNSEDRPVDGVKILRARIVEETGDE.

Residues 1–155 form the PPIase cyclophilin-type domain; the sequence is MATDVAFDTS…DGVKILRARI (155 aa).

The protein belongs to the cyclophilin-type PPIase family. PPIL1 subfamily.

It catalyses the reaction [protein]-peptidylproline (omega=180) = [protein]-peptidylproline (omega=0). Its function is as follows. PPIases accelerate the folding of proteins. It catalyzes the cis-trans isomerization of proline imidic peptide bonds in oligopeptides. The sequence is that of Peptidyl-prolyl cis-trans isomerase-like 1 (cypC) from Aspergillus niger.